A 206-amino-acid polypeptide reads, in one-letter code: Phosphoribosyl-dephospho-CoA transferase (206 aa).

Catalysis depends on residues aspartate 131 and aspartate 133.

This sequence belongs to the MdcG family.

It catalyses the reaction apo-[malonate decarboxylase ACP] + 2'-(5''-triphospho-alpha-D-ribosyl)-3'-dephospho-CoA = holo-[malonate decarboxylase ACP] + diphosphate. Its function is as follows. Transfers 2'-(5-triphosphoribosyl)-3'-dephosphocoenzyme-A to the apo-[acyl-carrier-protein] of the malonate decarboxylase to yield holo-[acyl-carrier-protein]. The sequence is that of Phosphoribosyl-dephospho-CoA transferase from Pseudomonas fluorescens (strain Pf0-1).